We begin with the raw amino-acid sequence, 308 residues long: Homoserine O-acetyltransferase (308 aa).

The active-site Acyl-thioester intermediate is the C142. Substrate contacts are provided by K163 and S192. The active-site Proton acceptor is the H235. E237 is a catalytic residue. R249 serves as a coordination point for substrate.

This sequence belongs to the MetA family.

The protein localises to the cytoplasm. The enzyme catalyses L-homoserine + acetyl-CoA = O-acetyl-L-homoserine + CoA. It functions in the pathway amino-acid biosynthesis; L-methionine biosynthesis via de novo pathway; O-acetyl-L-homoserine from L-homoserine: step 1/1. Transfers an acetyl group from acetyl-CoA to L-homoserine, forming acetyl-L-homoserine. This is Homoserine O-acetyltransferase from Agrobacterium fabrum (strain C58 / ATCC 33970) (Agrobacterium tumefaciens (strain C58)).